Here is a 122-residue protein sequence, read N- to C-terminus: Large ribosomal subunit protein uL14 (122 aa).

The protein belongs to the universal ribosomal protein uL14 family. As to quaternary structure, part of the 50S ribosomal subunit. Forms a cluster with proteins L3 and L19. In the 70S ribosome, L14 and L19 interact and together make contacts with the 16S rRNA in bridges B5 and B8.

Binds to 23S rRNA. Forms part of two intersubunit bridges in the 70S ribosome. This is Large ribosomal subunit protein uL14 from Methylobacterium sp. (strain 4-46).